A 281-amino-acid chain; its full sequence is NADPH-dependent 7-cyano-7-deazaguanine reductase (281 aa).

Residue 89-91 (VES) coordinates substrate. 91–92 (SK) is a binding site for NADPH. Cys188 serves as the catalytic Thioimide intermediate. Asp195 serves as the catalytic Proton donor. Residue 227–228 (HE) participates in substrate binding. 256 to 257 (RG) lines the NADPH pocket.

It belongs to the GTP cyclohydrolase I family. QueF type 2 subfamily. Homodimer.

The protein localises to the cytoplasm. The catalysed reaction is 7-aminomethyl-7-carbaguanine + 2 NADP(+) = 7-cyano-7-deazaguanine + 2 NADPH + 3 H(+). The protein operates within tRNA modification; tRNA-queuosine biosynthesis. Its function is as follows. Catalyzes the NADPH-dependent reduction of 7-cyano-7-deazaguanine (preQ0) to 7-aminomethyl-7-deazaguanine (preQ1). The protein is NADPH-dependent 7-cyano-7-deazaguanine reductase of Azoarcus sp. (strain BH72).